We begin with the raw amino-acid sequence, 471 residues long: GLPGRKGPVGDAGPPGQLGVTGPQGAPGFPGVTIPGQKGDRGPPGSRGNPGMPGPPGPPGSPVEGIKGDKGLMGEPGQRGPPGAIGDMGSPGHPGAPGVPGQPGARGDPGFYGFPGMKGKKGNSGFPGPPGPPGQSGPKGPPGVRGEPGTVKIISLPGSPGPPGSAGEPGMQGEPGPPGPPGDPGPCGPKGKPGEDGPPGTPGPTGEKGNKGCKGEQGPPGSDGLPGLKGKPGDTGPPAAGAVMRGFVFTRHSQTTAIPSCPEGTEPLYSGFSLLFVQGNEQAHGQDLGTLGSCLQRFTTMPFLFCNINDVCNFASRNDYSYWLSTPAMIPMDMAPITGRALEPYISRCTVCEGPAIAIAVHSQTTDIPPCPAGWISLWKGFSFIMFTSAGSEGAGQALASPGSCLEEFRASPFIECHGRGTCNYYSNSYSFWLASLDPKRMFRKPIPSTVKAGELENIISRCQVCMKMRP.

Residues 1–238 form a triple-helical region region; sequence GLPGRKGPVG…KGKPGDTGPP (238 aa). Positions 1 to 241 are disordered; it reads GLPGRKGPVG…PGDTGPPAAG (241 aa). Residues 52-61 are compositionally biased toward pro residues; it reads MPGPPGPPGS. Residues 106-108 carry the Cell attachment site motif; that stretch reads RGD. The span at 127–141 shows a compositional bias: pro residues; the sequence is PGPPGPPGQSGPKGP. Residues 165–174 show a composition bias toward low complexity; that stretch reads SAGEPGMQGE. A compositionally biased stretch (pro residues) spans 175–187; the sequence is PGPPGPPGDPGPC. A hydroxyproline mark is found at Pro-232 and Pro-238. Positions 246-470 constitute a Collagen IV NC1 domain; sequence GFVFTRHSQT…SRCQVCMKMR (225 aa). Intrachain disulfides connect Cys-261-Cys-352, Cys-294-Cys-349, Cys-306-Cys-312, Cys-371-Cys-466, Cys-405-Cys-463, and Cys-417-Cys-423. Residue Met-334 forms an S-Lysyl-methionine sulfilimine (Met-Lys) (interchain with K-452) linkage. An S-Lysyl-methionine sulfilimine (Lys-Met) (interchain with M-334) cross-link involves residue Lys-452.

It belongs to the type IV collagen family. As to quaternary structure, there are six type IV collagen isoforms, alpha 1(IV)-alpha 6(IV), each of which can form a triple helix structure with 2 other chains to generate type IV collagen network. The alpha 3(IV) chain forms a triple helical protomer with alpha 4(IV) and alpha 5(IV); this triple helical structure dimerizes through NC1-NC1 domain interactions such that the alpha 3(IV), alpha 4(IV) and alpha 5(IV) chains of one protomer connect with the alpha 5(IV), alpha 4(IV) and alpha 3(IV) chains of the opposite promoter, respectively. Interacts with ITGB3. Associates with LAMB2 at the neuromuscular junction and in GBM. Post-translationally, prolines at the third position of the tripeptide repeating unit (G-X-Y) are hydroxylated in some or all of the chains. In terms of processing, type IV collagens contain numerous cysteine residues which are involved in inter- and intramolecular disulfide bonding. 12 of these, located in the NC1 domain, are conserved in all known type IV collagens. The trimeric structure of the NC1 domains is stabilized by covalent bonds between Lys and Met residues. Post-translationally, phosphorylated. Thought to be phosphorylated by CERT, but CERT does not have kinase activity.

It is found in the secreted. The protein localises to the extracellular space. Its subcellular location is the extracellular matrix. The protein resides in the basement membrane. Its function is as follows. Type IV collagen is the major structural component of glomerular basement membranes (GBM), forming a 'chicken-wire' meshwork together with laminins, proteoglycans and entactin/nidogen. This chain is Collagen alpha-3(IV) chain (COL4A3), found in Bos taurus (Bovine).